The sequence spans 261 residues: Uridylate kinase (261 aa).

The interval 1 to 23 (MTEPDVAGAPASKPEPASTGAAS) is disordered. Residue 36–39 (KLGG) coordinates ATP. Glycine 77 serves as a coordination point for UMP. 2 residues coordinate ATP: glycine 78 and arginine 82. UMP contacts are provided by residues aspartate 97 and 158 to 165 (MGLPYFST). Residues phenylalanine 191 and aspartate 194 each coordinate ATP.

Belongs to the UMP kinase family. In terms of assembly, homohexamer.

The protein resides in the cytoplasm. The enzyme catalyses UMP + ATP = UDP + ADP. The protein operates within pyrimidine metabolism; CTP biosynthesis via de novo pathway; UDP from UMP (UMPK route): step 1/1. Inhibited by UTP. Catalyzes the reversible phosphorylation of UMP to UDP. This Mycobacterium tuberculosis (strain ATCC 25177 / H37Ra) protein is Uridylate kinase.